A 940-amino-acid polypeptide reads, in one-letter code: Isoleucine--tRNA ligase (940 aa).

A 'HIGH' region motif is present at residues 58 to 68 (PYANGAIHIGH). Residue glutamate 564 coordinates L-isoleucyl-5'-AMP. The short motif at 605–609 (KMSKS) is the 'KMSKS' region element. Position 608 (lysine 608) interacts with ATP. Zn(2+)-binding residues include cysteine 903, cysteine 906, cysteine 923, and cysteine 926.

It belongs to the class-I aminoacyl-tRNA synthetase family. IleS type 1 subfamily. In terms of assembly, monomer. It depends on Zn(2+) as a cofactor.

The protein localises to the cytoplasm. The enzyme catalyses tRNA(Ile) + L-isoleucine + ATP = L-isoleucyl-tRNA(Ile) + AMP + diphosphate. Catalyzes the attachment of isoleucine to tRNA(Ile). As IleRS can inadvertently accommodate and process structurally similar amino acids such as valine, to avoid such errors it has two additional distinct tRNA(Ile)-dependent editing activities. One activity is designated as 'pretransfer' editing and involves the hydrolysis of activated Val-AMP. The other activity is designated 'posttransfer' editing and involves deacylation of mischarged Val-tRNA(Ile). This Nitrosococcus oceani (strain ATCC 19707 / BCRC 17464 / JCM 30415 / NCIMB 11848 / C-107) protein is Isoleucine--tRNA ligase.